Here is a 616-residue protein sequence, read N- to C-terminus: Proline--tRNA ligase (616 aa).

Belongs to the class-II aminoacyl-tRNA synthetase family. ProS type 1 subfamily. Homodimer.

Its subcellular location is the cytoplasm. The enzyme catalyses tRNA(Pro) + L-proline + ATP = L-prolyl-tRNA(Pro) + AMP + diphosphate. Its function is as follows. Catalyzes the attachment of proline to tRNA(Pro) in a two-step reaction: proline is first activated by ATP to form Pro-AMP and then transferred to the acceptor end of tRNA(Pro). As ProRS can inadvertently accommodate and process non-cognate amino acids such as alanine and cysteine, to avoid such errors it has two additional distinct editing activities against alanine. One activity is designated as 'pretransfer' editing and involves the tRNA(Pro)-independent hydrolysis of activated Ala-AMP. The other activity is designated 'posttransfer' editing and involves deacylation of mischarged Ala-tRNA(Pro). The misacylated Cys-tRNA(Pro) is not edited by ProRS. The polypeptide is Proline--tRNA ligase (Streptococcus sanguinis (strain SK36)).